The following is a 510-amino-acid chain: GMP synthase [glutamine-hydrolyzing] (510 aa).

Residues 5–195 (LVLVVDFGGQ…LFNVCNLKGD (191 aa)) enclose the Glutamine amidotransferase type-1 domain. Cysteine 82 (nucleophile) is an active-site residue. Catalysis depends on residues histidine 169 and glutamate 171. The GMPS ATP-PPase domain maps to 196-385 (WSMSSFAEQQ…LGIPHKLVWR (190 aa)). 223–229 (SGGVDSS) lines the ATP pocket.

As to quaternary structure, homodimer.

The enzyme catalyses XMP + L-glutamine + ATP + H2O = GMP + L-glutamate + AMP + diphosphate + 2 H(+). Its pathway is purine metabolism; GMP biosynthesis; GMP from XMP (L-Gln route): step 1/1. Catalyzes the synthesis of GMP from XMP. The polypeptide is GMP synthase [glutamine-hydrolyzing] (Clostridium botulinum (strain Okra / Type B1)).